The following is a 417-amino-acid chain: UDP-N-acetylglucosamine 1-carboxyvinyltransferase (417 aa).

Lysine 22 to asparagine 23 contacts phosphoenolpyruvate. Residue arginine 93 participates in UDP-N-acetyl-alpha-D-glucosamine binding. Catalysis depends on cysteine 117, which acts as the Proton donor. 2-(S-cysteinyl)pyruvic acid O-phosphothioketal is present on cysteine 117. UDP-N-acetyl-alpha-D-glucosamine-binding residues include aspartate 304 and isoleucine 326.

Belongs to the EPSP synthase family. MurA subfamily.

Its subcellular location is the cytoplasm. It catalyses the reaction phosphoenolpyruvate + UDP-N-acetyl-alpha-D-glucosamine = UDP-N-acetyl-3-O-(1-carboxyvinyl)-alpha-D-glucosamine + phosphate. Its pathway is cell wall biogenesis; peptidoglycan biosynthesis. Its function is as follows. Cell wall formation. Adds enolpyruvyl to UDP-N-acetylglucosamine. This Neisseria gonorrhoeae (strain ATCC 700825 / FA 1090) protein is UDP-N-acetylglucosamine 1-carboxyvinyltransferase.